We begin with the raw amino-acid sequence, 115 residues long: Hydrogenase maturation factor HypA (115 aa).

Residue histidine 2 participates in Ni(2+) binding. Residues cysteine 73, cysteine 76, cysteine 89, and cysteine 92 each contribute to the Zn(2+) site.

The protein belongs to the HypA/HybF family.

Its function is as follows. Involved in the maturation of [NiFe] hydrogenases. Required for nickel insertion into the metal center of the hydrogenase. In Parabacteroides distasonis (strain ATCC 8503 / DSM 20701 / CIP 104284 / JCM 5825 / NCTC 11152), this protein is Hydrogenase maturation factor HypA.